Reading from the N-terminus, the 125-residue chain is Holo-[acyl-carrier-protein] synthase (125 aa).

Mg(2+)-binding residues include Asp-8 and Glu-57.

The protein belongs to the P-Pant transferase superfamily. AcpS family. It depends on Mg(2+) as a cofactor.

It localises to the cytoplasm. It catalyses the reaction apo-[ACP] + CoA = holo-[ACP] + adenosine 3',5'-bisphosphate + H(+). Its function is as follows. Transfers the 4'-phosphopantetheine moiety from coenzyme A to a Ser of acyl-carrier-protein. In Koribacter versatilis (strain Ellin345), this protein is Holo-[acyl-carrier-protein] synthase.